The sequence spans 283 residues: Mitochondrial outer membrane protein porin (283 aa).

This sequence belongs to the eukaryotic mitochondrial porin family.

It localises to the mitochondrion outer membrane. In terms of biological role, forms a channel through the cell membrane that allows diffusion of small hydrophilic molecules. The channel adopts an open conformation at low or zero membrane potential and a closed conformation at potentials above 30-40 mV. The open state has a weak anion selectivity whereas the closed state is cation-selective. This Neurospora crassa (strain ATCC 24698 / 74-OR23-1A / CBS 708.71 / DSM 1257 / FGSC 987) protein is Mitochondrial outer membrane protein porin.